A 105-amino-acid chain; its full sequence is MYVIVDIQGQQMKVEQGRRLFVHHIKDVESGASVEFDKVLLVDNNGAITVGSPLVEGAKVVCEVLTPLVKGDKVLIFHKKRRKGYRKLNGHRQQFTEILVKEVVA.

The protein belongs to the bacterial ribosomal protein bL21 family. Part of the 50S ribosomal subunit. Contacts protein L20.

Functionally, this protein binds to 23S rRNA in the presence of protein L20. This Porphyromonas gingivalis (strain ATCC BAA-308 / W83) protein is Large ribosomal subunit protein bL21.